The following is a 252-amino-acid chain: MPRKILGVIPARFSSTRFPGKVLAQIANKTMLQHVYERAGLATYLTSTIIATDDERVYTAAKSFGARVRMTRADHLSGTDRVAEVASAENAEIIVNIQGDEPLIDPAAIDAAVLPLVHEPDVLMGTLKKRIEDPREIVDPNVVKVVTDHAGDAIYFSRCPIPFDRDRSADTPYFKHVGLYVYQRDFLLSYSTLPVGPLERSERLEQLRALENGYRIRVVETEYESLGVDTPEDLERVSRLFKASILQGMGNG.

It belongs to the KdsB family.

It is found in the cytoplasm. It carries out the reaction 3-deoxy-alpha-D-manno-oct-2-ulosonate + CTP = CMP-3-deoxy-beta-D-manno-octulosonate + diphosphate. The protein operates within nucleotide-sugar biosynthesis; CMP-3-deoxy-D-manno-octulosonate biosynthesis; CMP-3-deoxy-D-manno-octulosonate from 3-deoxy-D-manno-octulosonate and CTP: step 1/1. Its pathway is bacterial outer membrane biogenesis; lipopolysaccharide biosynthesis. Its function is as follows. Activates KDO (a required 8-carbon sugar) for incorporation into bacterial lipopolysaccharide in Gram-negative bacteria. In Solibacter usitatus (strain Ellin6076), this protein is 3-deoxy-manno-octulosonate cytidylyltransferase.